The following is a 240-amino-acid chain: UPF0309 protein in nagA 3'region (240 aa).

The SIS domain occupies 31–206; the sequence is IVKRLVQGGI…CAQIIEILHE (176 aa).

This sequence belongs to the UPF0309 family.

The chain is UPF0309 protein in nagA 3'region from Lysinibacillus sphaericus (Bacillus sphaericus).